The primary structure comprises 359 residues: Nicotinate-nucleotide--dimethylbenzimidazole phosphoribosyltransferase (359 aa).

Glutamate 318 serves as the catalytic Proton acceptor.

It belongs to the CobT family. Homodimer.

It catalyses the reaction 5,6-dimethylbenzimidazole + nicotinate beta-D-ribonucleotide = alpha-ribazole 5'-phosphate + nicotinate + H(+). The protein operates within nucleoside biosynthesis; alpha-ribazole biosynthesis; alpha-ribazole from 5,6-dimethylbenzimidazole: step 1/2. In terms of biological role, catalyzes the synthesis of alpha-ribazole-5'-phosphate from nicotinate mononucleotide (NAMN) and 5,6-dimethylbenzimidazole (DMB). The polypeptide is Nicotinate-nucleotide--dimethylbenzimidazole phosphoribosyltransferase (Escherichia coli (strain UTI89 / UPEC)).